The primary structure comprises 1212 residues: DNA-directed RNA polymerase subunit beta (1212 aa).

Positions 1176-1195 (QQEKKKLAEEAAKKDDKSAE) are enriched in basic and acidic residues. A disordered region spans residues 1176–1212 (QQEKKKLAEEAAKKDDKSAEPVDQSDSSTSSDDKVSK).

It belongs to the RNA polymerase beta chain family. In terms of assembly, the RNAP catalytic core consists of 2 alpha, 1 beta, 1 beta' and 1 omega subunit. When a sigma factor is associated with the core the holoenzyme is formed, which can initiate transcription.

The catalysed reaction is RNA(n) + a ribonucleoside 5'-triphosphate = RNA(n+1) + diphosphate. In terms of biological role, DNA-dependent RNA polymerase catalyzes the transcription of DNA into RNA using the four ribonucleoside triphosphates as substrates. The protein is DNA-directed RNA polymerase subunit beta of Lactobacillus gasseri (strain ATCC 33323 / DSM 20243 / BCRC 14619 / CIP 102991 / JCM 1131 / KCTC 3163 / NCIMB 11718 / NCTC 13722 / AM63).